The sequence spans 193 residues: dCTP deaminase (193 aa).

DCTP-binding positions include 110–115 (RSSLAR), aspartate 128, 136–138 (VLE), tyrosine 171, lysine 178, and glutamine 182. Catalysis depends on glutamate 138, which acts as the Proton donor/acceptor. Residues 169–193 (RPYNRREDAKYRNQQGAVASRIDKD) form a disordered region.

It belongs to the dCTP deaminase family. Homotrimer.

The enzyme catalyses dCTP + H2O + H(+) = dUTP + NH4(+). The protein operates within pyrimidine metabolism; dUMP biosynthesis; dUMP from dCTP (dUTP route): step 1/2. Its function is as follows. Catalyzes the deamination of dCTP to dUTP. The polypeptide is dCTP deaminase (Sodalis glossinidius (strain morsitans)).